The following is a 78-amino-acid chain: Large ribosomal subunit protein bL28 (78 aa).

It belongs to the bacterial ribosomal protein bL28 family.

The protein is Large ribosomal subunit protein bL28 of Dichelobacter nodosus (strain VCS1703A).